Reading from the N-terminus, the 150-residue chain is Transcription antitermination protein NusB (150 aa).

It belongs to the NusB family.

Its function is as follows. Involved in transcription antitermination. Required for transcription of ribosomal RNA (rRNA) genes. Binds specifically to the boxA antiterminator sequence of the ribosomal RNA (rrn) operons. The sequence is that of Transcription antitermination protein NusB from Alcanivorax borkumensis (strain ATCC 700651 / DSM 11573 / NCIMB 13689 / SK2).